Consider the following 513-residue polypeptide: HTH-type transcriptional regulatory protein TyrR (513 aa).

The region spanning 2-72 (RLEVFCEDRL…GVTDVRTVPW (71 aa)) is the ACT domain. A PAS domain is found at 78 to 114 (EHLALSALLEALPEPVLSVDMKSKVDMANPASCQLFG). The Sigma-54 factor interaction domain occupies 206–428 (IVAVSPKMKH…LKNAIYRALT (223 aa)). ATP is bound by residues 234–241 (GDTGTGKD) and 290–299 (ANGGSVLLDE). A DNA-binding region (H-T-H motif) is located at residues 482–502 (STRKLAKRLGVSHTAIANKLR).

As to quaternary structure, homodimer. In presence of tyrosine (or high concentrations of phenylalanine or tryptophan) and ATP, it self-associates to form an hexamer. At low tyrosine concentrations, homodimers can bind to certain recognition sequences referred to as 'strong TyrR boxes'. Homohexamers are the active repressing species, interacting with two or three tyrR boxes in the targeted regulatory DNA, including 'strong TyrR boxes' and lower-affinity sites called 'weak TyrR boxes'.

It is found in the cytoplasm. With respect to regulation, binding of ATP strongly enhances the affinity of TyrR for tyrosine. In terms of biological role, dual transcriptional regulator of the TyrR regulon, which includes a number of genes coding for proteins involved in the biosynthesis or transport of the three aromatic amino acids, phenylalanine, tyrosine and tryptophan. These three aromatic amino acids act as effectors which bind to the TyrR protein to form an active regulatory protein. Modulates the expression of at least eight unlinked transcription units, including aroF, aroG, aroLM, aroP, mtr, tyrA, tyrB and tyrP. In most cases TyrR acts as a repressor, but positive effects have been observed on the tyrP gene, which is repressed in the presence of tyrosine and activated at high phenylalanine concentrations. Is also involved in activation, but not repression, of mtr expression in association with phenylalanine or tyrosine. Acts by binding specifically to TyrR boxes in the promoter region of the target genes. The polypeptide is HTH-type transcriptional regulatory protein TyrR (Escherichia coli (strain K12)).